A 210-amino-acid polypeptide reads, in one-letter code: Guanylate kinase (210 aa).

The 181-residue stretch at 6–186 (GVILVLSSPS…TADRISNILR (181 aa)) folds into the Guanylate kinase-like domain. 13 to 20 (SPSGCGKT) is a binding site for ATP.

This sequence belongs to the guanylate kinase family.

The protein localises to the cytoplasm. The catalysed reaction is GMP + ATP = GDP + ADP. Its function is as follows. Essential for recycling GMP and indirectly, cGMP. This is Guanylate kinase from Anaplasma phagocytophilum (strain HZ).